We begin with the raw amino-acid sequence, 171 residues long: CASP-like protein 0U2 (171 aa).

Residues 1-22 (MPVFGLAALKLNWEALSTPKFR) lie on the Cytoplasmic side of the membrane. Residues 23 to 42 (VTFAQWVCSLLMWSLMASYS) traverse the membrane as a helical segment. Topologically, residues 43-48 (KHGEFK) are extracellular. The chain crosses the membrane as a helical span at residues 49–69 (FVVVFGLVMWGLASTYLVYQL). Residues 70-77 (LNGPPLAP) are Cytoplasmic-facing. Residues 78 to 98 (IVEFWANVAAGSLAFICLVLA) form a helical membrane-spanning segment. The Extracellular portion of the chain corresponds to 99–121 (SATCNRAVGEPQTKVCSGELKPK). Residues 122–142 (ASAAFAFLLLCAYGGLAYLSW) traverse the membrane as a helical segment. Residues 143-171 (RTWRNPPTIASYALHDDPEFAQPLHSSHK) are Cytoplasmic-facing.

It belongs to the Casparian strip membrane proteins (CASP) family. Homodimer and heterodimers.

It is found in the cell membrane. In Chlorokybus atmophyticus (Soil alga), this protein is CASP-like protein 0U2.